A 351-amino-acid chain; its full sequence is Methionine import ATP-binding protein MetN (351 aa).

The 240-residue stretch at 2 to 241 folds into the ABC transporter domain; sequence IELRNVTKTY…PKTEIAKKFT (240 aa). 38-45 is an ATP binding site; it reads GKSGAGKS.

This sequence belongs to the ABC transporter superfamily. Methionine importer (TC 3.A.1.24) family. As to quaternary structure, the complex is composed of two ATP-binding proteins (MetN), two transmembrane proteins (MetI) and a solute-binding protein (MetQ).

Its subcellular location is the cell inner membrane. It catalyses the reaction L-methionine(out) + ATP + H2O = L-methionine(in) + ADP + phosphate + H(+). The catalysed reaction is D-methionine(out) + ATP + H2O = D-methionine(in) + ADP + phosphate + H(+). In terms of biological role, part of the ABC transporter complex MetNIQ involved in methionine import. Responsible for energy coupling to the transport system. The polypeptide is Methionine import ATP-binding protein MetN (Coxiella burnetii (strain RSA 493 / Nine Mile phase I)).